Reading from the N-terminus, the 116-residue chain is NADPH-dependent 7-cyano-7-deazaguanine reductase (116 aa).

C31 (thioimide intermediate) is an active-site residue. Catalysis depends on D38, which acts as the Proton donor. Substrate contacts are provided by residues 53-55 (IEL) and 72-73 (YE).

It belongs to the GTP cyclohydrolase I family. QueF type 1 subfamily.

It localises to the cytoplasm. The enzyme catalyses 7-aminomethyl-7-carbaguanine + 2 NADP(+) = 7-cyano-7-deazaguanine + 2 NADPH + 3 H(+). The protein operates within tRNA modification; tRNA-queuosine biosynthesis. Catalyzes the NADPH-dependent reduction of 7-cyano-7-deazaguanine (preQ0) to 7-aminomethyl-7-deazaguanine (preQ1). The sequence is that of NADPH-dependent 7-cyano-7-deazaguanine reductase from Chlorobaculum parvum (strain DSM 263 / NCIMB 8327) (Chlorobium vibrioforme subsp. thiosulfatophilum).